A 178-amino-acid chain; its full sequence is MASSMISSPAVTTVNRAGAGMVAPFTGLKSMAGFPTRKTNNDITSIASNGGRVQCMQVWPPIGKKKFETLSYLPDLDDAQLAKEVEYLLRKGWIPCLEFELEHGFVYREHNRSPXYYDGRYWTMWKLPMFGCTDASQVLKELQEAKTAYPNGFIRIIGFDNVRQVQCISFIAYKPPGF.

Residues 1-54 (MASSMISSPAVTTVNRAGAGMVAPFTGLKSMAGFPTRKTNNDITSIASNGGRVQ) constitute a chloroplast transit peptide.

It belongs to the RuBisCO small chain family. As to quaternary structure, heterohexadecamer of 8 large and 8 small subunits.

The protein localises to the plastid. Its subcellular location is the chloroplast. RuBisCO catalyzes two reactions: the carboxylation of D-ribulose 1,5-bisphosphate, the primary event in carbon dioxide fixation, as well as the oxidative fragmentation of the pentose substrate. Both reactions occur simultaneously and in competition at the same active site. Although the small subunit is not catalytic it is essential for maximal activity. This chain is Ribulose bisphosphate carboxylase small subunit, chloroplastic 1, found in Glycine max (Soybean).